Here is a 930-residue protein sequence, read N- to C-terminus: Nonribosomal peptide synthetase acyN (930 aa).

The segment at 15–436 (LDPQDNKISV…AGRAKETIIV (422 aa)) is adenylation (A) domain. The 80-residue stretch at 567 to 646 (APSNETEATI…GLAGTLETLM (80 aa)) folds into the Carrier domain. At Ser604 the chain carries O-(pantetheine 4'-phosphoryl)serine. A thioesterase (TE) domain region spans residues 665–914 (PLWLVHPGVG…HYTMLGPDNI (250 aa)).

The protein belongs to the NRP synthetase family.

It carries out the reaction 2 3-phenylpyruvate + 2 ATP = polyporic acid + 2 AMP + 2 diphosphate + H(+). The protein operates within secondary metabolite biosynthesis. Its activity is regulated as follows. Hydroxyphenylpyruvate acts more like a competitive inhibitor rather than a substrate. Functionally, nonribosomal peptide synthetase that mediates the biosynthesis of polyporic acid via the condensation of 2 phenylpyruvate units. Polyporic acid is further hydroxylaed by the cytochrome P450 monooxygenase MO6277 into less toxic ascocorynin. This chain is Nonribosomal peptide synthetase acyN, found in Ascocoryne sarcoides (Purple jellydisc fungus).